The chain runs to 482 residues: Arginine/ornithine antiporter (482 aa).

Residues Met-1–Arg-10 lie on the Cytoplasmic side of the membrane. A helical membrane pass occupies residues Leu-11–Pro-31. The Periplasmic segment spans residues Gln-32–Val-40. A helical membrane pass occupies residues Gly-41 to Phe-61. The Cytoplasmic segment spans residues Gln-62–Trp-100. Residues Leu-101–Phe-121 traverse the membrane as a helical segment. Residues Gly-122–Gly-124 are Periplasmic-facing. A helical membrane pass occupies residues Asp-125–Leu-145. Over Arg-146–Thr-156 the chain is Cytoplasmic. A helical transmembrane segment spans residues Val-157–Phe-177. The Periplasmic segment spans residues Lys-178–Arg-202. Residues Asn-203 to Ser-223 form a helical membrane-spanning segment. The Cytoplasmic portion of the chain corresponds to Arg-224–Thr-235. The chain crosses the membrane as a helical span at residues Val-236–Val-256. The Periplasmic portion of the chain corresponds to Met-257–Ala-283. A helical transmembrane segment spans residues Val-284–Leu-304. The Cytoplasmic portion of the chain corresponds to Cys-305–Asn-333. The helical transmembrane segment at Ala-334–Gly-354 threads the bilayer. The Periplasmic portion of the chain corresponds to Asp-355–Met-365. Residues Leu-366–Leu-386 traverse the membrane as a helical segment. At Leu-387 to Lys-403 the chain is on the cytoplasmic side. The chain crosses the membrane as a helical span at residues Asp-404–Leu-424. A topological domain (periplasmic) is located at residue Lys-425. The chain crosses the membrane as a helical span at residues Tyr-426–His-446. Residues Glu-447–Lys-458 lie on the Cytoplasmic side of the membrane. A helical transmembrane segment spans residues Leu-459–Phe-479. The Periplasmic portion of the chain corresponds to Leu-480–Leu-482.

It belongs to the amino acid-polyamine-organocation (APC) superfamily. Basic amino acid/polyamine antiporter (APA) (TC 2.A.3.2) family.

The protein localises to the cell inner membrane. The enzyme catalyses L-ornithine(in) + L-arginine(out) = L-ornithine(out) + L-arginine(in). Its function is as follows. Catalyzes electroneutral exchange between arginine and ornithine to allow high-efficiency energy conversion in the arginine deiminase pathway. Also mediates the proton motive force-driven uptake of arginine and ornithine, but the exchange is several orders of magnitude faster than the proton motive force-driven transport. The chain is Arginine/ornithine antiporter from Pseudomonas aeruginosa (strain ATCC 15692 / DSM 22644 / CIP 104116 / JCM 14847 / LMG 12228 / 1C / PRS 101 / PAO1).